The chain runs to 660 residues: Bifunctional polymyxin resistance protein ArnA (660 aa).

Residues 1–304 (MKAVIFAYHD…TLGLVAGARL (304 aa)) are formyltransferase ArnAFT. Histidine 104 acts as the Proton donor; for formyltransferase activity in catalysis. (6R)-10-formyltetrahydrofolate contacts are provided by residues arginine 114 and 136-140 (VKRAD). A dehydrogenase ArnADH region spans residues 314-660 (RRIRVLILGV…RSVDVAERAS (347 aa)). Residues aspartate 347 and 368–369 (DI) each bind NAD(+). Residues alanine 393, tyrosine 398, and 432-433 (TS) each bind UDP-alpha-D-glucuronate. Residue glutamate 434 is the Proton acceptor; for decarboxylase activity of the active site. Residues arginine 460, asparagine 492, 526 to 535 (KLIDGGQQKR), and tyrosine 613 each bind UDP-alpha-D-glucuronate. Arginine 619 serves as the catalytic Proton donor; for decarboxylase activity.

This sequence in the N-terminal section; belongs to the Fmt family. UDP-L-Ara4N formyltransferase subfamily. In the C-terminal section; belongs to the NAD(P)-dependent epimerase/dehydratase family. UDP-glucuronic acid decarboxylase subfamily. Homohexamer, formed by a dimer of trimers.

It carries out the reaction UDP-alpha-D-glucuronate + NAD(+) = UDP-beta-L-threo-pentopyranos-4-ulose + CO2 + NADH. It catalyses the reaction UDP-4-amino-4-deoxy-beta-L-arabinose + (6R)-10-formyltetrahydrofolate = UDP-4-deoxy-4-formamido-beta-L-arabinose + (6S)-5,6,7,8-tetrahydrofolate + H(+). Its pathway is nucleotide-sugar biosynthesis; UDP-4-deoxy-4-formamido-beta-L-arabinose biosynthesis; UDP-4-deoxy-4-formamido-beta-L-arabinose from UDP-alpha-D-glucuronate: step 1/3. It functions in the pathway nucleotide-sugar biosynthesis; UDP-4-deoxy-4-formamido-beta-L-arabinose biosynthesis; UDP-4-deoxy-4-formamido-beta-L-arabinose from UDP-alpha-D-glucuronate: step 3/3. The protein operates within bacterial outer membrane biogenesis; lipopolysaccharide biosynthesis. Its function is as follows. Bifunctional enzyme that catalyzes the oxidative decarboxylation of UDP-glucuronic acid (UDP-GlcUA) to UDP-4-keto-arabinose (UDP-Ara4O) and the addition of a formyl group to UDP-4-amino-4-deoxy-L-arabinose (UDP-L-Ara4N) to form UDP-L-4-formamido-arabinose (UDP-L-Ara4FN). The modified arabinose is attached to lipid A and is required for resistance to polymyxin and cationic antimicrobial peptides. The sequence is that of Bifunctional polymyxin resistance protein ArnA from Salmonella choleraesuis (strain SC-B67).